The primary structure comprises 478 residues: Putative L-amino-acid oxidase YobN (478 aa).

Residues S34, E53, R61, and 80–81 (MR) each bind FAD. 2 residues coordinate substrate: R81 and Y369. FAD is bound by residues E451 and 460 to 463 (MQGA).

This sequence belongs to the flavin monoamine oxidase family. FIG1 subfamily. FAD is required as a cofactor.

It carries out the reaction an L-alpha-amino acid + O2 + H2O = a 2-oxocarboxylate + H2O2 + NH4(+). The polypeptide is Putative L-amino-acid oxidase YobN (yobN) (Bacillus subtilis (strain 168)).